The chain runs to 143 residues: Large ribosomal subunit protein uL11 (143 aa).

It belongs to the universal ribosomal protein uL11 family. In terms of assembly, part of the ribosomal stalk of the 50S ribosomal subunit. Interacts with L10 and the large rRNA to form the base of the stalk. L10 forms an elongated spine to which L12 dimers bind in a sequential fashion forming a multimeric L10(L12)X complex. Post-translationally, one or more lysine residues are methylated.

Functionally, forms part of the ribosomal stalk which helps the ribosome interact with GTP-bound translation factors. In Pseudomonas putida (strain ATCC 700007 / DSM 6899 / JCM 31910 / BCRC 17059 / LMG 24140 / F1), this protein is Large ribosomal subunit protein uL11.